Here is a 934-residue protein sequence, read N- to C-terminus: Phosphoenolpyruvate carboxylase (934 aa).

Active-site residues include H161 and K593.

The protein belongs to the PEPCase type 1 family. The cofactor is Mg(2+).

The enzyme catalyses oxaloacetate + phosphate = phosphoenolpyruvate + hydrogencarbonate. Its function is as follows. Forms oxaloacetate, a four-carbon dicarboxylic acid source for the tricarboxylic acid cycle. In Mycobacterium leprae (strain TN), this protein is Phosphoenolpyruvate carboxylase (ppc).